A 643-amino-acid polypeptide reads, in one-letter code: 1-deoxy-D-xylulose-5-phosphate synthase (643 aa).

Thiamine diphosphate is bound by residues H78 and 119–121 (AHS). Position 150 (D150) interacts with Mg(2+). Thiamine diphosphate is bound by residues 151-152 (GS), N179, Y288, and E370. Residue N179 participates in Mg(2+) binding.

It belongs to the transketolase family. DXPS subfamily. Homodimer. Mg(2+) is required as a cofactor. Thiamine diphosphate serves as cofactor.

It carries out the reaction D-glyceraldehyde 3-phosphate + pyruvate + H(+) = 1-deoxy-D-xylulose 5-phosphate + CO2. It functions in the pathway metabolic intermediate biosynthesis; 1-deoxy-D-xylulose 5-phosphate biosynthesis; 1-deoxy-D-xylulose 5-phosphate from D-glyceraldehyde 3-phosphate and pyruvate: step 1/1. Catalyzes the acyloin condensation reaction between C atoms 2 and 3 of pyruvate and glyceraldehyde 3-phosphate to yield 1-deoxy-D-xylulose-5-phosphate (DXP). The sequence is that of 1-deoxy-D-xylulose-5-phosphate synthase from Brucella ovis (strain ATCC 25840 / 63/290 / NCTC 10512).